The primary structure comprises 1129 residues: Ubiquitin carboxyl-terminal hydrolase 15 (1129 aa).

The disordered stretch occupies residues 1–26; it reads MVLSNVDAEEVNMDSSMELEESSQEP. Over residues 7-23 the composition is skewed to acidic residues; the sequence is DAEEVNMDSSMELEESS. Residues 51-204 form the MATH domain; that stretch reads HASYSWVVKN…NDEICISVTV (154 aa). One can recognise a USP domain in the interval 230-545; it reads VGLKNQGATC…NAYMLVYFRK (316 aa). Cysteine 239 acts as the Nucleophile in catalysis. Residue histidine 481 is the Proton acceptor of the active site.

It belongs to the peptidase C19 family.

Its subcellular location is the nucleus. It carries out the reaction Thiol-dependent hydrolysis of ester, thioester, amide, peptide and isopeptide bonds formed by the C-terminal Gly of ubiquitin (a 76-residue protein attached to proteins as an intracellular targeting signal).. Its function is as follows. Hydrolase that deubiquitinates target proteins. Cleaves the UBL propeptide in sde2. Involved in regulating the steady-state levels of proteins including prp4. In Schizosaccharomyces pombe (strain 972 / ATCC 24843) (Fission yeast), this protein is Ubiquitin carboxyl-terminal hydrolase 15.